A 111-amino-acid chain; its full sequence is Ribonuclease P protein component (111 aa).

It belongs to the RnpA family. In terms of assembly, consists of a catalytic RNA component (M1 or rnpB) and a protein subunit.

The enzyme catalyses Endonucleolytic cleavage of RNA, removing 5'-extranucleotides from tRNA precursor.. In terms of biological role, RNaseP catalyzes the removal of the 5'-leader sequence from pre-tRNA to produce the mature 5'-terminus. It can also cleave other RNA substrates such as 4.5S RNA. The protein component plays an auxiliary but essential role in vivo by binding to the 5'-leader sequence and broadening the substrate specificity of the ribozyme. The sequence is that of Ribonuclease P protein component from Borrelia garinii subsp. bavariensis (strain ATCC BAA-2496 / DSM 23469 / PBi) (Borreliella bavariensis).